Here is a 312-residue protein sequence, read N- to C-terminus: Zinc finger protein 414 (312 aa).

Positions 1 to 110 (MEEKPSGPIP…RRPPPGKQIP (110 aa)) are disordered. The segment covering 29 to 48 (SPAVPAAAPSSSMSEEPGPE) has biased composition (low complexity). The segment covering 84 to 93 (GLTSIVSGTS) has biased composition (polar residues). 3 consecutive C2H2-type zinc fingers follow at residues 109–133 (IPCS…LRTH), 145–169 (FRCS…SKLH), and 176–201 (FKCE…CAEH). The segment at 203–312 (QSPAPPPPPA…GSDAPSGACR (110 aa)) is disordered. The segment covering 213–225 (LDREPPAPERPPE) has biased composition (basic and acidic residues). Composition is skewed to low complexity over residues 227–243 (DPAS…EPFT) and 265–285 (SPPR…SSAA).

The protein belongs to the krueppel C2H2-type zinc-finger protein family.

It is found in the nucleus. Functionally, may be involved in transcriptional regulation. The protein is Zinc finger protein 414 (ZNF414) of Homo sapiens (Human).